The sequence spans 309 residues: MRERVAMPIKIPDHLPAKEILLKENIFIMDESRAYTQDIRPLKICILNLMPTKQETETQLLRLLGNTPLQVDVSLLHPSTHSPRNTSKEHLNLFYKTIDEVKQQKFDGMIITGAPVETLPFHDVNYWNEMTSILDWTTTNVTSTLHICWGAQAGLYHHYGIKKKPLTTKLFGVYSHKLEVKNVNLLRGFDDVFYAPHSRHTTVSREDIERVDELIVLSSSEEAGVYIASSKDGKRVFVMGHSEYDAHTLKQEYERDVKRGIACDPPFNYFPEGNVDALPPLQWRAHSNLLFSNWLNYYVYQETPYHLDD.

C148 serves as the catalytic Acyl-thioester intermediate. The substrate site is built by K169 and S198. The active-site Proton acceptor is H241. The active site involves E243. R255 contacts substrate.

The protein belongs to the MetA family.

It is found in the cytoplasm. It carries out the reaction L-homoserine + acetyl-CoA = O-acetyl-L-homoserine + CoA. Its pathway is amino-acid biosynthesis; L-methionine biosynthesis via de novo pathway; O-acetyl-L-homoserine from L-homoserine: step 1/1. In terms of biological role, transfers an acetyl group from acetyl-CoA to L-homoserine, forming acetyl-L-homoserine. In vitro, can also use propionyl-CoA as acyl donor. This is Homoserine O-acetyltransferase from Shouchella clausii (Alkalihalobacillus clausii).